Here is a 336-residue protein sequence, read N- to C-terminus: Probable G-protein coupled receptor 160 (336 aa).

The Extracellular portion of the chain corresponds to 1 to 21 (MTALPSKNCSFQYQSHQAPRS). A glycan (N-linked (GlcNAc...) asparagine) is linked at Asn-8. A helical transmembrane segment spans residues 22-42 (LDATCLLLLIILGKVLLNVLI). At 43-56 (LRVKRKDTSWSFME) the chain is on the cytoplasmic side. The helical transmembrane segment at 57 to 77 (YFCFSLALVDLLLLVNISVLT) threads the bilayer. At 78-95 (YFRDFVVLGIRFTNYHIC) the chain is on the extracellular side. The helical transmembrane segment at 96-116 (LLTQIVSFAYGFLHYPVCSLA) threads the bilayer. The Cytoplasmic segment spans residues 117-136 (CIDYWCNLSRATKPSSRWQK). A helical transmembrane segment spans residues 137-157 (LLYLLTVILTWISVLAYVLGD). Residues 158–187 (PAISASLKTHKTSVNQCPSYVSTQSHWLSL) are Extracellular-facing. Residues 188–208 (SMLMILSVAFLISWQEVVALI) form a helical membrane-spanning segment. The Cytoplasmic portion of the chain corresponds to 209-243 (QAIRIASYKNKAVLYFPFPPHTSYTVSPRAVLLPR). The helical transmembrane segment at 244-264 (LIVCFLGTWFPFVALQVLILS) threads the bilayer. Residues 265–272 (LRVQIPAY) lie on the Extracellular side of the membrane. The chain crosses the membrane as a helical span at residues 273-293 (IEMNVPWLYFVNSFLIAAVYW). Residues 294 to 336 (FNCHKLYWRDGMFPVDPFINWKCCFVPVHRLKQVERPMSIIIC) lie on the Cytoplasmic side of the membrane.

The protein belongs to the G-protein coupled receptor 1 family.

It localises to the cell membrane. Functionally, orphan receptor. This chain is Probable G-protein coupled receptor 160 (Gpr160), found in Rattus norvegicus (Rat).